The chain runs to 269 residues: MDNYAVWGNPIKQSKSPQIHKIFAEQTKQCMEYKAILGDPEKFETELLRFFADGAKGCNITAPFKERAYSLADEYSERALTAEACNTLKRLQDGRLYADNTDGAGLVSDLERLGWLKSKQSLLIIGAGGATKGVLLPLLQAQQNITLCNRTLTKARDLADKFAPYGNIQAMKLSEIPVQKFDLVINATSLGLQGKTVDIEPEILRLAGAVYDMQYDKGKDTPFVAWAKALGVQNVHDGFGMLVGQAAHSFYLWRGIMPDIKPLLENDLI.

Shikimate contacts are provided by residues 14–16 and T61; that span reads SKS. Residue K65 is the Proton acceptor of the active site. An NADP(+)-binding site is contributed by E77. N86 and D102 together coordinate shikimate. Residues 126-130, 149-154, and M213 each bind NADP(+); these read GAGGA and NRTLTK. Y215 contacts shikimate. Residue G238 participates in NADP(+) binding.

The protein belongs to the shikimate dehydrogenase family. Homodimer.

The catalysed reaction is shikimate + NADP(+) = 3-dehydroshikimate + NADPH + H(+). It participates in metabolic intermediate biosynthesis; chorismate biosynthesis; chorismate from D-erythrose 4-phosphate and phosphoenolpyruvate: step 4/7. Functionally, involved in the biosynthesis of the chorismate, which leads to the biosynthesis of aromatic amino acids. Catalyzes the reversible NADPH linked reduction of 3-dehydroshikimate (DHSA) to yield shikimate (SA). The polypeptide is Shikimate dehydrogenase (NADP(+)) (Actinobacillus succinogenes (strain ATCC 55618 / DSM 22257 / CCUG 43843 / 130Z)).